We begin with the raw amino-acid sequence, 118 residues long: Holo-[acyl-carrier-protein] synthase (118 aa).

Residues Asp5 and Glu51 each contribute to the Mg(2+) site.

The protein belongs to the P-Pant transferase superfamily. AcpS family. Mg(2+) serves as cofactor.

It localises to the cytoplasm. It carries out the reaction apo-[ACP] + CoA = holo-[ACP] + adenosine 3',5'-bisphosphate + H(+). Transfers the 4'-phosphopantetheine moiety from coenzyme A to a Ser of acyl-carrier-protein. The chain is Holo-[acyl-carrier-protein] synthase from Helicobacter pylori (strain P12).